A 92-amino-acid chain; its full sequence is Protein E7 (92 aa).

Residues 1-43 are E7 terminal domain; it reads MHGTRPSLADITLILEEIPEIIDLHCDEQFDSSEEENNHQLTE. Residues 24-28 carry the LXCXE motif; interaction with host RB1 and TMEM173/STING motif; it reads LHCDE. Residues 55–91 fold into a zinc finger; it reads CCKCGRAVRLVVECGPEDIRDLEQLFLKTLNLVCPHC. Residues 73 to 81 carry the Nuclear export signal motif; it reads IRDLEQLFL.

The protein belongs to the papillomaviridae E7 protein family. In terms of assembly, homodimer. Homooligomer. Interacts with host RB1; this interaction induces dissociation of RB1-E2F1 complex thereby disrupting RB1 activity. Interacts with host EP300; this interaction represses EP300 transcriptional activity. Interacts with protein E2; this interaction inhibits E7 oncogenic activity. Interacts with host TMEM173/STING; this interaction impairs the ability of TMEM173/STING to sense cytosolic DNA and promote the production of type I interferon (IFN-alpha and IFN-beta). In terms of processing, highly phosphorylated.

Its subcellular location is the host cytoplasm. It is found in the host nucleus. Functionally, plays a role in viral genome replication by driving entry of quiescent cells into the cell cycle. Stimulation of progression from G1 to S phase allows the virus to efficiently use the cellular DNA replicating machinery to achieve viral genome replication. E7 protein has both transforming and trans-activating activities. Induces the disassembly of the E2F1 transcription factor from RB1, with subsequent transcriptional activation of E2F1-regulated S-phase genes. Interferes with host histone deacetylation mediated by HDAC1 and HDAC2, leading to transcription activation. Also plays a role in the inhibition of both antiviral and antiproliferative functions of host interferon alpha. Interaction with host TMEM173/STING impairs the ability of TMEM173/STING to sense cytosolic DNA and promote the production of type I interferon (IFN-alpha and IFN-beta). The chain is Protein E7 from Homo sapiens (Human).